The sequence spans 212 residues: Ribosomal RNA small subunit methyltransferase G (212 aa).

Residues Gly73, 127-128 (IE), and Arg143 contribute to the S-adenosyl-L-methionine site.

It belongs to the methyltransferase superfamily. RNA methyltransferase RsmG family.

It localises to the cytoplasm. The enzyme catalyses guanosine(527) in 16S rRNA + S-adenosyl-L-methionine = N(7)-methylguanosine(527) in 16S rRNA + S-adenosyl-L-homocysteine. Functionally, specifically methylates the N7 position of guanine in position 527 of 16S rRNA. The chain is Ribosomal RNA small subunit methyltransferase G from Methylobacterium sp. (strain 4-46).